Consider the following 147-residue polypeptide: Mucoricin (147 aa).

A Ricin B-type lectin domain is found at 4-143 (EEGRLFFIKS…VSANQRWELV (140 aa)).

Belongs to the ribosome-inactivating protein family. Type 1 RIP subfamily.

The protein resides in the secreted. It carries out the reaction Endohydrolysis of the N-glycosidic bond at one specific adenosine on the 28S rRNA.. Functionally, N-glycosylase that inhibits protein synthesis in the host by depurinating ribosomal rRNA, and thus acts as a ribosomal inactivating protein (RIP). Promotes vascular permeability in the host and induces necrosis and apoptosis of host alveolar epithelial cells. The sequence is that of Mucoricin from Rhizopus delemar (strain RA 99-880 / ATCC MYA-4621 / FGSC 9543 / NRRL 43880) (Mucormycosis agent).